Here is a 324-residue protein sequence, read N- to C-terminus: Olfactory receptor 1L3 (324 aa).

Residues 1 to 25 (MGMSNLTRLSEFILLGLSSRSEDQR) lie on the Extracellular side of the membrane. Asn5 is a glycosylation site (N-linked (GlcNAc...) asparagine). The chain crosses the membrane as a helical span at residues 26–49 (PLFALFLIIYLVTLMGNLLIILAI). The Cytoplasmic segment spans residues 50-57 (HSDPRLQN). Residues 58 to 79 (PMYFFLSILSFADICYTTVIVP) traverse the membrane as a helical segment. The Extracellular portion of the chain corresponds to 80 to 100 (KMLVNFLSEKKTISYAECLAQ). Cys97 and Cys189 are oxidised to a cystine. Residues 101-120 (MYFFLVFGNIDSYLLAAMAI) form a helical membrane-spanning segment. At 121–139 (NRCVAICNPFHYVTVMNRR) the chain is on the cytoplasmic side. Residues 140 to 158 (CCVLLLAFPITFSYFHSLL) traverse the membrane as a helical segment. At 159 to 196 (HVLLVNRLTFCTSNVIHHFFCDVNPVLKLSCSSTFVNE) the chain is on the extracellular side. Residues 197–219 (IVAMTEGLASVMAPFVCIIISYL) form a helical membrane-spanning segment. Residues 220–236 (RILIAVLKIPSAAGKHK) are Cytoplasmic-facing. Residues 237-259 (AFSTCSSHLTVVILFYGSISYVY) traverse the membrane as a helical segment. Residues 260-271 (LQPLSSYTVKDR) lie on the Extracellular side of the membrane. Residues 272 to 291 (IATINYTVLTSVLNPFIYSL) form a helical membrane-spanning segment. Residues 292-324 (RNKDMKRGLQKLINKIKSQMSRFSTKTNKICGP) are Cytoplasmic-facing.

It belongs to the G-protein coupled receptor 1 family.

It localises to the cell membrane. Its function is as follows. Odorant receptor. The chain is Olfactory receptor 1L3 (OR1L3) from Homo sapiens (Human).